The primary structure comprises 435 residues: Trigger factor (435 aa).

The PPIase FKBP-type domain maps to 162–247 (GDRINIDYRG…LSGVESSKLP (86 aa)).

Belongs to the FKBP-type PPIase family. Tig subfamily.

The protein resides in the cytoplasm. The enzyme catalyses [protein]-peptidylproline (omega=180) = [protein]-peptidylproline (omega=0). Involved in protein export. Acts as a chaperone by maintaining the newly synthesized protein in an open conformation. Functions as a peptidyl-prolyl cis-trans isomerase. This Nitrosospira multiformis (strain ATCC 25196 / NCIMB 11849 / C 71) protein is Trigger factor.